Consider the following 204-residue polypeptide: Putative glutathione S-transferase alpha-3 (204 aa).

Residue Thr2 is modified to N-acetylthreonine. The GST N-terminal domain occupies 2–79 (TKPQLSYFKV…YIASQHDFVG (78 aa)). Glutathione is bound by residues Tyr8, 49 to 50 (QL), and 63 to 64 (QS). The GST C-terminal domain occupies 81-202 (TPEEKALVDE…YLKNRPITER (122 aa)).

Belongs to the GST superfamily. Alpha family.

It carries out the reaction RX + glutathione = an S-substituted glutathione + a halide anion + H(+). Functionally, conjugation of reduced glutathione to a wide number of exogenous and endogenous hydrophobic electrophiles. The protein is Putative glutathione S-transferase alpha-3 (gsta3) of Dictyostelium discoideum (Social amoeba).